Consider the following 308-residue polypeptide: Ankyrin repeat and SOCS box protein 12 (308 aa).

5 ANK repeats span residues Ile-63–Ser-92, Lys-96–Gly-125, Asn-129–Val-158, Ser-171–Tyr-200, and Gln-213–Leu-243. The 41-residue stretch at Pro-268–Gln-308 folds into the SOCS box domain.

It belongs to the ankyrin SOCS box (ASB) family. In terms of assembly, interacts with CUL5 and RNF7.

Its pathway is protein modification; protein ubiquitination. Probable substrate-recognition component of a SCF-like ECS (Elongin-Cullin-SOCS-box protein) E3 ubiquitin-protein ligase complex which mediates the ubiquitination and subsequent proteasomal degradation of target proteins. In Mus musculus (Mouse), this protein is Ankyrin repeat and SOCS box protein 12 (Asb12).